The primary structure comprises 495 residues: Cornulin (495 aa).

Positions 49–84 (HDPATVDEVLRLLDEDHTGTVEFKEFLVLVFKVAQA) constitute an EF-hand domain. The Ca(2+) site is built by aspartate 62, aspartate 64, threonine 66, threonine 68, and glutamate 73. 2 disordered regions span residues 96 to 439 (ACGS…TVVG) and 460 to 481 (LHTS…KRGI). A compositionally biased stretch (polar residues) spans 99–110 (SQESGSLHSGAS). Over residues 137–151 (HRQSQQGSRGQNRPG) the composition is skewed to low complexity. A compositionally biased stretch (polar residues) spans 152 to 194 (VQTQGQATGSAWVSSYDRQAESQSQERISPQIQLSGQTEQTQK). The span at 196–222 (GEGKRNQTTEMRPERQPQTREQDRAHQ) shows a compositional bias: basic and acidic residues. Positions 226-242 (TVTGSGTQTQAGATQTV) are enriched in low complexity. Polar residues-rich tracts occupy residues 243–282 (EQDS…SQAV) and 290–303 (QAGT…QTVE). Residues 307-324 (SHQTGSTSTQTQESTNGQ) show a composition bias toward low complexity. A compositionally biased stretch (polar residues) spans 334–355 (GRSQTSQAVTGGHTQIQAGSHT). Low complexity predominate over residues 374–385 (QGQTQTQPGSGQ). Composition is skewed to polar residues over residues 403 to 420 (QAQT…WSST) and 460 to 473 (LHTS…QDAA).

The protein belongs to the S100-fused protein family. In terms of assembly, homodimer. As to expression, expressed in the basal skin layer (at protein level). Squamous epithelia cell-specific. Expressed in the esophagus (periphery of the cells of the granular and the upper spinous layers), foreskin (granular and lower cornified cells), scalp skin (granular layer), inner root sheath of the hair follicle and in primary keratinocytes (at protein level). Expressed in the squamous epithelium of the cervix, esophagus, foreskin and larynx. Expressed in the fetal bladder and scalp skin. Expressed at very low levels in the lung, kidney, uterus, skeletal muscle, heart and fetal brain. Undetectable or barely detectable in esophageal and oral squamous cell carcinoma compared with the matched adjacent normal esophageal mucosa. Undetectable or barely detectable in larynx and esophagus from patients with pH-documented laryngopharyngeal reflux (LPR).

It localises to the cytoplasm. Functionally, promotes cell proliferation, G1/S cell cycle progression and induces expression of the cell cycle regulator CCND1. Regulates proliferation induced by pro-inflammatory cytokine response via activation of NFKB1 and PI3K/AKT signaling pathways. The protein is Cornulin (CRNN) of Homo sapiens (Human).